The primary structure comprises 364 residues: MTDVTGAPADVLHTLFHSDQGGHEQVVLCQDRASGLKAVIALHSTALGPALGGTRFYPYANEAEAVADALNLARGMSYKNAMAGLEHGGGKAVIIGDPEQIKSEELLLAYGRFVASLGGRYVTACDVGTYVADMDVVARECRWTTGRSPENGGAGDSSVLTSFGVYQGMRAAAQHLWGDPTLRDRTVGIAGVGKVGHHLVEHLLAEGAHVVVTDVRKDVVRSLTERHPSVVAVADTDALIRVENLDIYAPCALGGALNDETVPVLTAKVVCGAANNQLAHPGVEKDLADRGILYAPDYVVNAGGVIQVADELHGFDFDRCKAKAAKIYDTTLAIFARAKEDGIPPAAAADRIAEQRMAEARARR.

Lysine 91 is an active-site residue. Residue 191 to 197 (GVGKVGH) participates in NAD(+) binding.

The protein belongs to the Glu/Leu/Phe/Val dehydrogenases family. Homodimer.

The protein resides in the cytoplasm. The catalysed reaction is L-valine + NAD(+) + H2O = 3-methyl-2-oxobutanoate + NH4(+) + NADH + H(+). The protein operates within amino-acid degradation; L-valine degradation. Inhibited by pyridoxal 5'-phosphate (PLP). Its function is as follows. Oxidative deamination of branched-chain amino acids. Oxidizes L-valine and L-alpha-aminobutyric acid efficiently, and L-alanine and L-isoleucine less efficiently. D-valine and L-glutamate were not substrates for the enzyme. The catabolism of valine is the major source of fatty acid precursors for macrolide biosynthesis and a vital source of antibiotic precursors. In Streptomyces albus (strain ATCC 21838 / DSM 41398 / FERM P-419 / JCM 4703 / NBRC 107858), this protein is Valine dehydrogenase.